The sequence spans 181 residues: Der GTPase-activating protein YihI (181 aa).

Disordered stretches follow at residues 1–75 and 145–181; these read MSRK…KKIP and EPEA…DYKG. The span at 32–43 shows a compositional bias: basic residues; that stretch reads RLRKKDKKRKGL. Positions 146–155 are enriched in acidic residues; it reads PEAEEEFEDE. Positions 156–165 are enriched in basic and acidic residues; sequence APVRKSRSDD. The segment covering 166–181 has biased composition (acidic residues); that stretch reads DLLADFEDFDMDDYKG.

The protein belongs to the YihI family. As to quaternary structure, interacts with Der.

Functionally, a GTPase-activating protein (GAP) that modifies Der/EngA GTPase function. May play a role in ribosome biogenesis. The polypeptide is Der GTPase-activating protein YihI (Vibrio vulnificus (strain YJ016)).